The sequence spans 260 residues: Hydroxyethylthiazole kinase 2 (260 aa).

Residue M40 participates in substrate binding. The ATP site is built by R116 and T161. A188 is a binding site for substrate.

The protein belongs to the Thz kinase family. The cofactor is Mg(2+).

It catalyses the reaction 5-(2-hydroxyethyl)-4-methylthiazole + ATP = 4-methyl-5-(2-phosphooxyethyl)-thiazole + ADP + H(+). Its pathway is cofactor biosynthesis; thiamine diphosphate biosynthesis; 4-methyl-5-(2-phosphoethyl)-thiazole from 5-(2-hydroxyethyl)-4-methylthiazole: step 1/1. Catalyzes the phosphorylation of the hydroxyl group of 4-methyl-5-beta-hydroxyethylthiazole (THZ). This Oceanobacillus iheyensis (strain DSM 14371 / CIP 107618 / JCM 11309 / KCTC 3954 / HTE831) protein is Hydroxyethylthiazole kinase 2.